The primary structure comprises 302 residues: TATA-box-binding protein (302 aa).

2 disordered regions span residues 1–22 (MEQNNSLPPFAQGLASPQGAMT) and 50–81 (SLLEEQQRQQQQQQAASQQQGGMVGGSGQTPQ). The segment covering 50–70 (SLLEEQQRQQQQQQAASQQQG) has biased composition (low complexity). 2 repeat units span residues 128–204 (LQNI…ARVV) and 218–295 (IQNM…YPIL).

Belongs to the TBP family. In terms of tissue distribution, enriched in testis but hardly detectable in the ovary (at protein level).

It is found in the nucleus. Functionally, general transcription factor that functions at the core of the DNA-binding multiprotein factor TFIID. Binding of TFIID to the TATA box is the initial transcriptional step of the pre-initiation complex (PIC), playing a role in the activation of eukaryotic genes transcribed by RNA polymerase II. Members of the TBP family are differentially required for transcription and development during early embryogenesis. Regulates mRNA levels in the early embryo by both transcriptional and post-transcriptional mechanisms. Required for transcription of a subset of genes at the mid-blastula transition (MBT). Negatively regulates the expression of other embryonic genes, including autoregulation of the tbp promoter itself. Also functions within a transcription-dependent mechanism to direct the temporally-regulated degradation of a subset of maternal mRNAs after the MBT. This is part of a general mechanism to regulate the maternal to zygotic transition and is required for normal embryonic development. Binds to promoters of a subset of genes. Required for gastrulation. This Danio rerio (Zebrafish) protein is TATA-box-binding protein.